The following is a 189-amino-acid chain: MSSRGVRAAGTDGNDFQNRQRIAQHYQESAQYKSVLKWFFVPHFLILVFMWLKVGSEFLRYNFGWKNAFFERLDMPAAYPWEYVWCLSFIPIVLALSSFQRNKLKVLHYAYYAEFICGIFPCMIGLGGQLPELLEYANDMEGSNTPTFKGIFPMVIIWYIFFAVALQIHGFSMYFMHHLAAAWAPVKRD.

Residues 1–34 are Cytoplasmic-facing; the sequence is MSSRGVRAAGTDGNDFQNRQRIAQHYQESAQYKS. Residues 35-55 form a helical membrane-spanning segment; sequence VLKWFFVPHFLILVFMWLKVG. Over 56 to 75 the chain is Lumenal; sequence SEFLRYNFGWKNAFFERLDM. Residues 76 to 96 form a helical membrane-spanning segment; sequence PAAYPWEYVWCLSFIPIVLAL. Residues 97-105 are Cytoplasmic-facing; that stretch reads SSFQRNKLK. A helical transmembrane segment spans residues 106-126; sequence VLHYAYYAEFICGIFPCMIGL. Topologically, residues 127-150 are lumenal; it reads GGQLPELLEYANDMEGSNTPTFKG. A helical membrane pass occupies residues 151–171; sequence IFPMVIIWYIFFAVALQIHGF. Residues 172 to 189 lie on the Cytoplasmic side of the membrane; the sequence is SMYFMHHLAAAWAPVKRD.

This sequence belongs to the jagunal family.

It localises to the endoplasmic reticulum membrane. The polypeptide is Protein jagunal homolog (Caenorhabditis briggsae).